We begin with the raw amino-acid sequence, 152 residues long: UPF0756 membrane protein JDM1_1594 (152 aa).

4 helical membrane passes run 25–45 (ATVV…LTTI), 52–72 (WGVT…QIGF), 85–105 (WIAV…VGLL), and 115–135 (LVFG…GPII).

It belongs to the UPF0756 family.

It is found in the cell membrane. In Lactiplantibacillus plantarum (strain JDM1) (Lactobacillus plantarum), this protein is UPF0756 membrane protein JDM1_1594.